The primary structure comprises 202 residues: MKPWILGLTGGIGSGKSAVVEQFGRLGVHWVDADHAARWVVEPGKPALARIAEHFGDGVLTPAGELDRAVLRARVFENAGERRWLEQLLHPLIRQEIAEHLSRAQSPYAILVSPLLIEAGQYRQADRVLVVDVPESLQLQRAMRRDQASEAQIRAILKAQASREERLRHADDVLVNDRDRAWLEAEVARLHDFYLTLRGGQP.

The region spanning 5–202 is the DPCK domain; the sequence is ILGLTGGIGS…FYLTLRGGQP (198 aa). 13 to 18 contributes to the ATP binding site; the sequence is GSGKSA.

This sequence belongs to the CoaE family.

It localises to the cytoplasm. It carries out the reaction 3'-dephospho-CoA + ATP = ADP + CoA + H(+). The protein operates within cofactor biosynthesis; coenzyme A biosynthesis; CoA from (R)-pantothenate: step 5/5. Catalyzes the phosphorylation of the 3'-hydroxyl group of dephosphocoenzyme A to form coenzyme A. The chain is Dephospho-CoA kinase from Stutzerimonas stutzeri (Pseudomonas stutzeri).